Consider the following 152-residue polypeptide: Transcriptional repressor NrdR (152 aa).

A zinc finger lies at 3-34; the sequence is CPYCNASDTKVIDSRLAAEGAQVRRRRSCNSC. The region spanning 49-139 is the ATP-cone domain; it reads PRIIKSSGKI…VYRDFQDIDA (91 aa).

This sequence belongs to the NrdR family. It depends on Zn(2+) as a cofactor.

Negatively regulates transcription of bacterial ribonucleotide reductase nrd genes and operons by binding to NrdR-boxes. The polypeptide is Transcriptional repressor NrdR (Psychrobacter arcticus (strain DSM 17307 / VKM B-2377 / 273-4)).